The sequence spans 644 residues: Exoribonuclease 2 (644 aa).

The RNB domain maps to arginine 189–lysine 516. Residues aspartate 561–valine 643 enclose the S1 motif domain.

The protein belongs to the RNR ribonuclease family. RNase II subfamily.

The protein resides in the cytoplasm. It catalyses the reaction Exonucleolytic cleavage in the 3'- to 5'-direction to yield nucleoside 5'-phosphates.. Functionally, involved in mRNA degradation. Hydrolyzes single-stranded polyribonucleotides processively in the 3' to 5' direction. In Escherichia coli O17:K52:H18 (strain UMN026 / ExPEC), this protein is Exoribonuclease 2.